Consider the following 824-residue polypeptide: Neuronal PAS domain-containing protein 2 (824 aa).

Residues 1-10 (MDEDEKDRAK) are compositionally biased toward basic and acidic residues. The disordered stretch occupies residues 1 to 21 (MDEDEKDRAKRASRNKSEKKR). The segment at 1–61 (MDEDEKDRAK…VIGFLQKHNE (61 aa)) is sufficient for heterodimer formation with BMAL1, E-box binding and for the effect of NADPH. In terms of domain architecture, bHLH spans 9–59 (AKRASRNKSEKKRRDQFNVLIKELSSMLPGNTRKMDKTTVLEKVIGFLQKH). The PAS 1 domain maps to 82 to 152 (NEEFTQLMLE…KILSSHMLVT (71 aa)). Heme b is bound by residues His-119 and His-171. The region spanning 237 to 307 (FLKEMCIVDE…RCHQHLMQFG (71 aa)) is the PAS 2 domain. In terms of domain architecture, PAC spans 311-354 (SCCYRFLTKGQQWIWLQTHYYITYHQWNSKPEFIVCTHSVVSYA). Disordered stretches follow at residues 367–437 (EDPP…MAEA), 556–667 (SSTQ…PDFS), 681–704 (QPMM…RQVK), and 739–824 (PSFP…QPPR). Residues 378-390 (ALKDKGSSLEPRQ) show a composition bias toward basic and acidic residues. Residues 421-431 (TAMSEPTSTPT) show a composition bias toward polar residues. The segment covering 559–576 (QRPEAQQQLQQRSAAVTQ) has biased composition (low complexity). Residues 587–610 (GQISSAQVTSQHLLRESSVISTQG) are compositionally biased toward polar residues. Residues 614-636 (MRSSQLMQSSGRSGSSLVSPFSS) are compositionally biased toward low complexity. Polar residues-rich tracts occupy residues 645-664 (LNLT…QPSP) and 694-704 (SEVSRTGRQVK). Low complexity predominate over residues 739 to 760 (PSFPASQPSPLQPAQARQQPPQ). A compositionally biased stretch (polar residues) spans 766-789 (QAPTSLHSEQQDSLLLSTYSQQPG). The segment covering 794 to 805 (PQPPPAQPQPLR) has biased composition (pro residues). Over residues 809-824 (RVSSLSESSGLQQPPR) the composition is skewed to low complexity.

As to quaternary structure, component of the circadian clock oscillator which includes the CRY proteins, CLOCK or NPAS2, BMAL1 or BMAL2, CSNK1D and/or CSNK1E, TIMELESS and the PER proteins. Efficient DNA binding requires dimerization with another bHLH protein. Forms a heterodimer with BMAL1 and this heterodimerization is required for E-box-dependent transactivation. Interacts with NCOA3, KAT2B, CREBBP and EP300. It depends on heme as a cofactor.

Its subcellular location is the nucleus. Carbon monoxide (CO) and the redox state of the cell can modulate the transcriptional activity of the NPAS2-BMAL1 heterodimer. NADH and NADPH enhance the DNA-binding activity of the heterodimer whereas CO binds the heme group in NPAS2 and inhibits the DNA-binding activity of the heterodimer. Its function is as follows. Transcriptional activator which forms a core component of the circadian clock. The circadian clock, an internal time-keeping system, regulates various physiological processes through the generation of approximately 24 hour circadian rhythms in gene expression, which are translated into rhythms in metabolism and behavior. It is derived from the Latin roots 'circa' (about) and 'diem' (day) and acts as an important regulator of a wide array of physiological functions including metabolism, sleep, body temperature, blood pressure, endocrine, immune, cardiovascular, and renal function. Consists of two major components: the central clock, residing in the suprachiasmatic nucleus (SCN) of the brain, and the peripheral clocks that are present in nearly every tissue and organ system. Both the central and peripheral clocks can be reset by environmental cues, also known as Zeitgebers (German for 'timegivers'). The predominant Zeitgeber for the central clock is light, which is sensed by retina and signals directly to the SCN. The central clock entrains the peripheral clocks through neuronal and hormonal signals, body temperature and feeding-related cues, aligning all clocks with the external light/dark cycle. Circadian rhythms allow an organism to achieve temporal homeostasis with its environment at the molecular level by regulating gene expression to create a peak of protein expression once every 24 hours to control when a particular physiological process is most active with respect to the solar day. Transcription and translation of core clock components (CLOCK, NPAS2, BMAL1, BMAL2, PER1, PER2, PER3, CRY1 and CRY2) plays a critical role in rhythm generation, whereas delays imposed by post-translational modifications (PTMs) are important for determining the period (tau) of the rhythms (tau refers to the period of a rhythm and is the length, in time, of one complete cycle). A diurnal rhythm is synchronized with the day/night cycle, while the ultradian and infradian rhythms have a period shorter and longer than 24 hours, respectively. Disruptions in the circadian rhythms contribute to the pathology of cardiovascular diseases, cancer, metabolic syndromes and aging. A transcription/translation feedback loop (TTFL) forms the core of the molecular circadian clock mechanism. Transcription factors, CLOCK or NPAS2 and BMAL1 or BMAL2, form the positive limb of the feedback loop, act in the form of a heterodimer and activate the transcription of core clock genes and clock-controlled genes (involved in key metabolic processes), harboring E-box elements (5'-CACGTG-3') within their promoters. The core clock genes: PER1/2/3 and CRY1/2 which are transcriptional repressors form the negative limb of the feedback loop and interact with the CLOCK|NPAS2-BMAL1|BMAL2 heterodimer inhibiting its activity and thereby negatively regulating their own expression. This heterodimer also activates nuclear receptors NR1D1/2 and RORA/B/G, which form a second feedback loop and which activate and repress BMAL1 transcription, respectively. The NPAS2-BMAL1 heterodimer positively regulates the expression of MAOA, F7 and LDHA and modulates the circadian rhythm of daytime contrast sensitivity by regulating the rhythmic expression of adenylate cyclase type 1 (ADCY1) in the retina. NPAS2 plays an important role in sleep homeostasis and in maintaining circadian behaviors in normal light/dark and feeding conditions and in the effective synchronization of feeding behavior with scheduled food availability. Regulates the gene transcription of key metabolic pathways in the liver and is involved in DNA damage response by regulating several cell cycle and DNA repair genes. Controls the circadian rhythm of NR0B2 expression by binding rhythmically to its promoter. Mediates the diurnal variation in the expression of GABARA1 receptor in the brain and contributes to the regulation of anxiety-like behaviors and GABAergic neurotransmission in the ventral striatum. The sequence is that of Neuronal PAS domain-containing protein 2 (NPAS2) from Homo sapiens (Human).